The primary structure comprises 52 residues: ATP synthase protein 8 (52 aa).

Residues 7–27 form a helical membrane-spanning segment; the sequence is MKWFLIYFIYLLIFYLFIMLI.

This sequence belongs to the ATPase protein 8 family. F-type ATPases have 2 components, CF(1) - the catalytic core - and CF(0) - the membrane proton channel.

It localises to the mitochondrion membrane. In terms of biological role, mitochondrial membrane ATP synthase (F(1)F(0) ATP synthase or Complex V) produces ATP from ADP in the presence of a proton gradient across the membrane which is generated by electron transport complexes of the respiratory chain. F-type ATPases consist of two structural domains, F(1) - containing the extramembraneous catalytic core and F(0) - containing the membrane proton channel, linked together by a central stalk and a peripheral stalk. During catalysis, ATP synthesis in the catalytic domain of F(1) is coupled via a rotary mechanism of the central stalk subunits to proton translocation. Part of the complex F(0) domain. Minor subunit located with subunit a in the membrane. The polypeptide is ATP synthase protein 8 (mt:ATPase8) (Apis mellifera ligustica (Common honeybee)).